The sequence spans 231 residues: Ribonuclease 3 (231 aa).

In terms of domain architecture, RNase III spans 7 to 135 (IQAIESKLNF…ILGAVYLDGG (129 aa)). Residue E48 coordinates Mg(2+). Residue D52 is part of the active site. Positions 121 and 124 each coordinate Mg(2+). The active site involves E124. Positions 160 to 229 (NPKNRLQQFT…AKQALSTHDN (70 aa)) constitute a DRBM domain.

This sequence belongs to the ribonuclease III family. As to quaternary structure, homodimer. Requires Mg(2+) as cofactor.

It is found in the cytoplasm. The catalysed reaction is Endonucleolytic cleavage to 5'-phosphomonoester.. Functionally, digests double-stranded RNA. Involved in the processing of primary rRNA transcript to yield the immediate precursors to the large and small rRNAs (23S and 16S). Processes some mRNAs, and tRNAs when they are encoded in the rRNA operon. Processes pre-crRNA and tracrRNA of type II CRISPR loci if present in the organism. This Chlamydia trachomatis serovar A (strain ATCC VR-571B / DSM 19440 / HAR-13) protein is Ribonuclease 3.